Here is a 168-residue protein sequence, read N- to C-terminus: Mediator of RNA polymerase II transcription subunit 7a (168 aa).

Coiled coils occupy residues lysine 64–leucine 92 and isoleucine 132–aspartate 166.

This sequence belongs to the Mediator complex subunit 7 family. In terms of assembly, component of the Mediator complex. Interacts with MEE14/CBP1.

Its subcellular location is the nucleus. In terms of biological role, component of the Mediator complex, a coactivator involved in the regulated transcription of nearly all RNA polymerase II-dependent genes. Mediator functions as a bridge to convey information from gene-specific regulatory proteins to the basal RNA polymerase II transcription machinery. The Mediator complex, having a compact conformation in its free form, is recruited to promoters by direct interactions with regulatory proteins and serves for the assembly of a functional pre-initiation complex with RNA polymerase II and the general transcription factors. The chain is Mediator of RNA polymerase II transcription subunit 7a (MED7A) from Arabidopsis thaliana (Mouse-ear cress).